The following is a 938-amino-acid chain: ATP-dependent 6-phosphofructokinase subunit beta (938 aa).

Residues 1–552 (MTQSLPLLNG…HLDNFMAINS (552 aa)) form an N-terminal catalytic PFK domain 1 region. ATP is bound by residues glycine 185, 249–250 (RC), and 279–282 (GDGS). Aspartate 280 is a Mg(2+) binding site. Residues 325–327 (SID), arginine 362, 369–371 (MGR), glutamate 426, arginine 454, and 460–463 (HVQR) contribute to the beta-D-fructose 6-phosphate site. The active-site Proton acceptor is aspartate 327. Positions 553-566 (ADHIEPKLPEHTHM) are interdomain linker. A C-terminal regulatory PFK domain 2 region spans residues 567-938 (KIAIVNVGAP…ADHLVGRKKL (372 aa)). Beta-D-fructose 2,6-bisphosphate contacts are provided by residues arginine 637, 695–699 (TLSNN), arginine 733, 740–742 (QGG), lysine 826, 832–835 (HVQQ), and arginine 915.

This sequence belongs to the phosphofructokinase type A (PFKA) family. ATP-dependent PFK group I subfamily. Eukaryotic two domain clade 'E' sub-subfamily. Heterooctamer of 4 alpha and 4 beta chains. Requires Mg(2+) as cofactor.

The protein resides in the cytoplasm. The enzyme catalyses beta-D-fructose 6-phosphate + ATP = beta-D-fructose 1,6-bisphosphate + ADP + H(+). Its pathway is carbohydrate degradation; glycolysis; D-glyceraldehyde 3-phosphate and glycerone phosphate from D-glucose: step 3/4. Its activity is regulated as follows. Allosterically activated by ADP, AMP, or fructose 2,6-bisphosphate, and allosterically inhibited by ATP or citrate. Its function is as follows. Catalyzes the phosphorylation of D-fructose 6-phosphate to fructose 1,6-bisphosphate by ATP, the first committing step of glycolysis. The sequence is that of ATP-dependent 6-phosphofructokinase subunit beta (PFK2) from Kluyveromyces lactis (strain ATCC 8585 / CBS 2359 / DSM 70799 / NBRC 1267 / NRRL Y-1140 / WM37) (Yeast).